The chain runs to 336 residues: Glyceraldehyde-3-phosphate dehydrogenase (336 aa).

Residues 12–13 (RI), Asp34, and Arg79 each bind NAD(+). Residues 150–152 (SCT), Thr181, 210–211 (TG), and Arg233 each bind D-glyceraldehyde 3-phosphate. The Nucleophile role is filled by Cys151. Asn315 contributes to the NAD(+) binding site.

This sequence belongs to the glyceraldehyde-3-phosphate dehydrogenase family. As to quaternary structure, homotetramer.

The protein localises to the cytoplasm. The enzyme catalyses D-glyceraldehyde 3-phosphate + phosphate + NAD(+) = (2R)-3-phospho-glyceroyl phosphate + NADH + H(+). The protein operates within carbohydrate degradation; glycolysis; pyruvate from D-glyceraldehyde 3-phosphate: step 1/5. Functionally, involved in osmoadaptation. This is Glyceraldehyde-3-phosphate dehydrogenase (gpdA) from Emericella nidulans (strain FGSC A4 / ATCC 38163 / CBS 112.46 / NRRL 194 / M139) (Aspergillus nidulans).